The primary structure comprises 385 residues: Deoxyguanosinetriphosphate triphosphohydrolase-like protein (385 aa).

A compositionally biased stretch (basic and acidic residues) spans 1 to 14 (MTEGVEGRSQERSD). A disordered region spans residues 1–23 (MTEGVEGRSQERSDLAGFAARSA). In terms of domain architecture, HD spans 75 to 204 (RLTHSLEVAQ…INYADEIAYN (130 aa)).

The protein belongs to the dGTPase family. Type 2 subfamily.

This is Deoxyguanosinetriphosphate triphosphohydrolase-like protein from Geobacter metallireducens (strain ATCC 53774 / DSM 7210 / GS-15).